A 1058-amino-acid polypeptide reads, in one-letter code: Carbamoyl phosphate synthase large chain (1058 aa).

Residues 1 to 401 (MPKRKDIQKI…SLLKACRSLE (401 aa)) are carboxyphosphate synthetic domain. Residues arginine 129, arginine 169, glycine 175, glycine 176, arginine 208, isoleucine 210, glutamate 215, glycine 241, isoleucine 242, histidine 243, glutamine 284, and glutamate 298 each coordinate ATP. Residues 133 to 327 (KQLMQELDQP…IAKLAAKIAV (195 aa)) form the ATP-grasp 1 domain. Glutamine 284, glutamate 298, and asparagine 300 together coordinate Mg(2+). Residues glutamine 284, glutamate 298, and asparagine 300 each coordinate Mn(2+). The segment at 402–546 (IGVCHNEMTS…YSTYELENES (145 aa)) is oligomerization domain. The tract at residues 547–929 (VQSNKESILV…ALYKAFEANN (383 aa)) is carbamoyl phosphate synthetic domain. Residues 671–861 (EKALKELGIP…MAQIATKLIL (191 aa)) enclose the ATP-grasp 2 domain. ATP-binding residues include arginine 707, serine 746, isoleucine 748, glutamate 752, glycine 777, valine 778, histidine 779, serine 780, glutamine 820, and glutamate 832. 3 residues coordinate Mg(2+): glutamine 820, glutamate 832, and asparagine 834. Positions 820, 832, and 834 each coordinate Mn(2+). Residues 930–1058 (SHLSEFGQIV…ESRCFNIEAI (129 aa)) enclose the MGS-like domain. The allosteric domain stretch occupies residues 930-1058 (SHLSEFGQIV…ESRCFNIEAI (129 aa)).

The protein belongs to the CarB family. In terms of assembly, composed of two chains; the small (or glutamine) chain promotes the hydrolysis of glutamine to ammonia, which is used by the large (or ammonia) chain to synthesize carbamoyl phosphate. Tetramer of heterodimers (alpha,beta)4. Requires Mg(2+) as cofactor. Mn(2+) serves as cofactor.

The catalysed reaction is hydrogencarbonate + L-glutamine + 2 ATP + H2O = carbamoyl phosphate + L-glutamate + 2 ADP + phosphate + 2 H(+). It catalyses the reaction hydrogencarbonate + NH4(+) + 2 ATP = carbamoyl phosphate + 2 ADP + phosphate + 2 H(+). The protein operates within amino-acid biosynthesis; L-arginine biosynthesis; carbamoyl phosphate from bicarbonate: step 1/1. It participates in pyrimidine metabolism; UMP biosynthesis via de novo pathway; (S)-dihydroorotate from bicarbonate: step 1/3. In terms of biological role, large subunit of the glutamine-dependent carbamoyl phosphate synthetase (CPSase). CPSase catalyzes the formation of carbamoyl phosphate from the ammonia moiety of glutamine, carbonate, and phosphate donated by ATP, constituting the first step of 2 biosynthetic pathways, one leading to arginine and/or urea and the other to pyrimidine nucleotides. The large subunit (synthetase) binds the substrates ammonia (free or transferred from glutamine from the small subunit), hydrogencarbonate and ATP and carries out an ATP-coupled ligase reaction, activating hydrogencarbonate by forming carboxy phosphate which reacts with ammonia to form carbamoyl phosphate. The protein is Carbamoyl phosphate synthase large chain of Streptococcus pyogenes serotype M18 (strain MGAS8232).